The following is a 222-amino-acid chain: Protein-L-isoaspartate O-methyltransferase (222 aa).

Residue S73 is part of the active site.

The protein belongs to the methyltransferase superfamily. L-isoaspartyl/D-aspartyl protein methyltransferase family.

It is found in the cytoplasm. It carries out the reaction [protein]-L-isoaspartate + S-adenosyl-L-methionine = [protein]-L-isoaspartate alpha-methyl ester + S-adenosyl-L-homocysteine. In terms of biological role, catalyzes the methyl esterification of L-isoaspartyl residues in peptides and proteins that result from spontaneous decomposition of normal L-aspartyl and L-asparaginyl residues. It plays a role in the repair and/or degradation of damaged proteins. The protein is Protein-L-isoaspartate O-methyltransferase of Chromobacterium violaceum (strain ATCC 12472 / DSM 30191 / JCM 1249 / CCUG 213 / NBRC 12614 / NCIMB 9131 / NCTC 9757 / MK).